The chain runs to 459 residues: Argininosuccinate lyase (459 aa).

It belongs to the lyase 1 family. Argininosuccinate lyase subfamily.

The protein localises to the cytoplasm. The enzyme catalyses 2-(N(omega)-L-arginino)succinate = fumarate + L-arginine. It participates in amino-acid biosynthesis; L-arginine biosynthesis; L-arginine from L-ornithine and carbamoyl phosphate: step 3/3. The chain is Argininosuccinate lyase from Geobacillus kaustophilus (strain HTA426).